The following is a 491-amino-acid chain: Cytochrome P450 2B3 (491 aa).

A heme-binding site is contributed by C436.

The protein belongs to the cytochrome P450 family. It depends on heme as a cofactor. As to expression, liver. Not found in the lung, kidney and prostate.

Its subcellular location is the endoplasmic reticulum membrane. The protein localises to the microsome membrane. The catalysed reaction is an organic molecule + reduced [NADPH--hemoprotein reductase] + O2 = an alcohol + oxidized [NADPH--hemoprotein reductase] + H2O + H(+). Functionally, cytochromes P450 are a group of heme-thiolate monooxygenases. In liver microsomes, this enzyme is involved in an NADPH-dependent electron transport pathway. It oxidizes a variety of structurally unrelated compounds, including steroids, fatty acids, and xenobiotics. The chain is Cytochrome P450 2B3 (Cyp2b3) from Rattus norvegicus (Rat).